The sequence spans 386 residues: Methylthioribose-1-phosphate isomerase (386 aa).

D255 acts as the Proton donor in catalysis.

Belongs to the eIF-2B alpha/beta/delta subunits family. MtnA subfamily.

The protein localises to the cytoplasm. It is found in the nucleus. The catalysed reaction is 5-(methylsulfanyl)-alpha-D-ribose 1-phosphate = 5-(methylsulfanyl)-D-ribulose 1-phosphate. It participates in amino-acid biosynthesis; L-methionine biosynthesis via salvage pathway; L-methionine from S-methyl-5-thio-alpha-D-ribose 1-phosphate: step 1/6. In terms of biological role, catalyzes the interconversion of methylthioribose-1-phosphate (MTR-1-P) into methylthioribulose-1-phosphate (MTRu-1-P). The polypeptide is Methylthioribose-1-phosphate isomerase (Trypanosoma brucei brucei (strain 927/4 GUTat10.1)).